A 701-amino-acid chain; its full sequence is Pentatricopeptide repeat-containing protein At5g50390, chloroplastic (701 aa).

The N-terminal 47 residues, 1 to 47, are a transit peptide targeting the chloroplast; the sequence is MEIPLSRYQSIRLDEIRDSSSNPKVLTFPRKFSLRGRRWKNPFGRLS. 12 PPR repeats span residues 86-116, 122-156, 157-187, 188-218, 223-257, 258-288, 289-323, 324-358, 359-389, 390-424, 425-460, and 461-491; these read SGVT…LEIR, GVST…GFEP, EQYM…IPER, NLYS…MWEE, ETHT…GVVD, NTFV…MPEK, TTVA…GVSI, DQFT…GFES, EIVA…LPRK, NIIS…NVAP, NHVT…GIKP, and RAMH…APLK. Positions 496-571 are type E motif; the sequence is MWAALLNACR…MPACTWVEVG (76 aa). The type E(+) motif; degenerate stretch occupies residues 572 to 606; it reads DQTHSFLSGDRFDSYNETVKRQIYQKVDELMEEIS. Residues 607–701 form a type DYW motif region; the sequence is EYGYSEEEQH…EGKCSCGGYW (95 aa).

This sequence belongs to the PPR family. PCMP-H subfamily.

Its subcellular location is the plastid. The protein resides in the chloroplast. This is Pentatricopeptide repeat-containing protein At5g50390, chloroplastic (PCMP-H58) from Arabidopsis thaliana (Mouse-ear cress).